Consider the following 294-residue polypeptide: Nucleoside-specific channel-forming protein Tsx (294 aa).

Positions Met1 to Ala22 are cleaved as a signal peptide.

This sequence belongs to the nucleoside-specific channel-forming outer membrane porin (Tsx) (TC 1.B.10) family.

Its subcellular location is the cell outer membrane. Functionally, functions as a substrate-specific channel for nucleosides and deoxynucleosides. Also functions in albicidin uptake and as receptor for colicin K. Also is a receptor for several Tsx-specific bacteriophages. The polypeptide is Nucleoside-specific channel-forming protein Tsx (Klebsiella aerogenes (strain ATCC 13048 / DSM 30053 / CCUG 1429 / JCM 1235 / KCTC 2190 / NBRC 13534 / NCIMB 10102 / NCTC 10006 / CDC 819-56) (Enterobacter aerogenes)).